Reading from the N-terminus, the 134-residue chain is Putative integral membrane protein YxzK (134 aa).

Helical transmembrane passes span 3-23 (VIRI…GEAI), 35-55 (IVGL…VSII), 58-78 (GAGF…TGVI), and 89-109 (LMLL…AGFA).

Its subcellular location is the cell membrane. This Bacillus subtilis (strain 168) protein is Putative integral membrane protein YxzK (yxzK).